Reading from the N-terminus, the 449-residue chain is tRNA-2-methylthio-N(6)-dimethylallyladenosine synthase (449 aa).

The MTTase N-terminal domain occupies 4-119 (RTFHIETFGC…APQALDRLVE (116 aa)). [4Fe-4S] cluster-binding residues include Cys13, Cys48, Cys82, Cys158, Cys162, and Cys165. Residues 144–375 (GAVPASVFVN…QTLQNRLTER (232 aa)) enclose the Radical SAM core domain. The TRAM domain occupies 378–446 (QDMVGKKVEV…KHSLLAEQAG (69 aa)).

Belongs to the methylthiotransferase family. MiaB subfamily. As to quaternary structure, monomer. [4Fe-4S] cluster serves as cofactor.

It is found in the cytoplasm. The catalysed reaction is N(6)-dimethylallyladenosine(37) in tRNA + (sulfur carrier)-SH + AH2 + 2 S-adenosyl-L-methionine = 2-methylsulfanyl-N(6)-dimethylallyladenosine(37) in tRNA + (sulfur carrier)-H + 5'-deoxyadenosine + L-methionine + A + S-adenosyl-L-homocysteine + 2 H(+). In terms of biological role, catalyzes the methylthiolation of N6-(dimethylallyl)adenosine (i(6)A), leading to the formation of 2-methylthio-N6-(dimethylallyl)adenosine (ms(2)i(6)A) at position 37 in tRNAs that read codons beginning with uridine. In Nitratidesulfovibrio vulgaris (strain DP4) (Desulfovibrio vulgaris), this protein is tRNA-2-methylthio-N(6)-dimethylallyladenosine synthase.